A 757-amino-acid polypeptide reads, in one-letter code: Protein hunchback (757 aa).

2 disordered regions span residues 30–51 (EPGHHLDGNSVASSPRQSPIPS) and 171–213 (EKLQ…EDMK). Residues 39 to 51 (SVASSPRQSPIPS) show a composition bias toward polar residues. Over residues 197 to 213 (EPEKEHDQMSNSSEDMK) the composition is skewed to basic and acidic residues. 4 C2H2-type zinc fingers span residues 239–261 (YKCKTCGVVAITKVDFWAHTRTH), 268–290 (LQCPKCPFVTEFKHHLEYHIRKH), 296–318 (FQCDKCSYTCVNKSMLNSHRKSH), and 324–348 (YRCADCDYATKYCHSFKLHLRKYGH). Disordered regions lie at residues 367–416 (DVYG…VATS), 511–535 (EQLQQQNQQQSDNEEEDQDDEYERK), and 602–694 (MTSP…APPS). Composition is skewed to low complexity over residues 397–414 (VAAVAPQQQQSQPAQPVA) and 512–521 (QLQQQNQQQS). Acidic residues predominate over residues 522–531 (DNEEEDQDDE). Low complexity predominate over residues 651-694 (ANTSASSTASSSGNSSNASSNSNGNSSSNSSSNGTTSAVAAPPS). 2 C2H2-type zinc fingers span residues 704–726 (YECKYCDIFFKDAVLYTIHMGYH) and 732–756 (FKCNMCGEKCDGPVGLFVHMARNAH).

It belongs to the hunchback C2H2-type zinc-finger protein family.

It is found in the nucleus. Functionally, gap class segmentation protein that controls development of head structures. The chain is Protein hunchback (hb) from Drosophila sechellia (Fruit fly).